The following is a 376-amino-acid chain: Dual-specificity RNA methyltransferase RlmN (376 aa).

Glu96 acts as the Proton acceptor in catalysis. Residues 102-341 (DEDRATLCVS…VVVRKTRGDD (240 aa)) enclose the Radical SAM core domain. An intrachain disulfide couples Cys109 to Cys346. Residues Cys116, Cys120, and Cys123 each coordinate [4Fe-4S] cluster. Residues 170–171 (GE), Ser202, 224–226 (SLH), and Asn303 contribute to the S-adenosyl-L-methionine site. Cys346 serves as the catalytic S-methylcysteine intermediate.

This sequence belongs to the radical SAM superfamily. RlmN family. The cofactor is [4Fe-4S] cluster.

It is found in the cytoplasm. It catalyses the reaction adenosine(2503) in 23S rRNA + 2 reduced [2Fe-2S]-[ferredoxin] + 2 S-adenosyl-L-methionine = 2-methyladenosine(2503) in 23S rRNA + 5'-deoxyadenosine + L-methionine + 2 oxidized [2Fe-2S]-[ferredoxin] + S-adenosyl-L-homocysteine. The enzyme catalyses adenosine(37) in tRNA + 2 reduced [2Fe-2S]-[ferredoxin] + 2 S-adenosyl-L-methionine = 2-methyladenosine(37) in tRNA + 5'-deoxyadenosine + L-methionine + 2 oxidized [2Fe-2S]-[ferredoxin] + S-adenosyl-L-homocysteine. Its function is as follows. Specifically methylates position 2 of adenine 2503 in 23S rRNA and position 2 of adenine 37 in tRNAs. m2A2503 modification seems to play a crucial role in the proofreading step occurring at the peptidyl transferase center and thus would serve to optimize ribosomal fidelity. The protein is Dual-specificity RNA methyltransferase RlmN of Pseudoalteromonas atlantica (strain T6c / ATCC BAA-1087).